Consider the following 788-residue polypeptide: LPS-assembly protein LptD (788 aa).

The N-terminal stretch at 1-23 (MSLTSRSLLATMISLALYGPAMA) is a signal peptide.

It belongs to the LptD family. As to quaternary structure, component of the lipopolysaccharide transport and assembly complex. Interacts with LptE and LptA.

It is found in the cell outer membrane. Its function is as follows. Together with LptE, is involved in the assembly of lipopolysaccharide (LPS) at the surface of the outer membrane. This is LPS-assembly protein LptD from Photobacterium profundum (strain SS9).